Reading from the N-terminus, the 177-residue chain is Endothelin-2 (177 aa).

An N-terminal signal peptide occupies residues 1 to 23 (MPTALCSIALALLVALHEGKSQA). The propeptide occupies 24–45 (ATTPIPEQPAPLPRARGSHLRT). Intrachain disulfides connect cysteine 48/cysteine 62 and cysteine 50/cysteine 58. Positions 69-177 (VNTPGQTAPY…RPTHSRQRKR (109 aa)) are excised as a propeptide. An endothelin-like region spans residues 95–110 (CECYSARDPACATFCH). The disordered stretch occupies residues 155 to 177 (HFARQQQKPTRETRPTHSRQRKR).

It belongs to the endothelin/sarafotoxin family. As to expression, expressed in various organs including heart, lung, liver, kidney, gastrointestinal tract, uterus and ovary, but not in spleen. Within the gastrointestinal tract, gene expression was detected in rumen, a ruminant-specific digestive organ, as well as stomach, duodenum and colon.

It is found in the secreted. Endothelins are endothelium-derived vasoconstrictor peptides. The polypeptide is Endothelin-2 (EDN2) (Bos taurus (Bovine)).